We begin with the raw amino-acid sequence, 519 residues long: Serine/threonine-protein kinase RIO1 (519 aa).

Positions 1–10 are enriched in pro residues; the sequence is MTPAPEPQDP. A disordered region spans residues 1-54; it reads MTPAPEPQDPPTIHEPVATEQTDDISDWDVESDYEDGYGAPSKSQAQGGASAAD. Acidic residues predominate over residues 21–36; the sequence is QTDDISDWDVESDYED. The span at 39–53 shows a compositional bias: low complexity; that stretch reads GAPSKSQAQGGASAA. The region spanning 122–519 is the Protein kinase domain; sequence SEIYGTISTG…KLVAANKKRK (398 aa). Lysine 154 and leucine 228 together coordinate ATP. The Proton acceptor role is filled by aspartate 281. Asparagine 286 and aspartate 298 together coordinate Mg(2+). The 4-aspartylphosphate intermediate role is filled by aspartate 298. Residues 418 to 519 are disordered; that stretch reads ADSKVPESTG…KLVAANKKRK (102 aa). The segment covering 439-464 has biased composition (acidic residues); the sequence is GSEDEEGDEGESGEVESGDEEREEGE. Residues 440–519 are association with (pre-)40S ribosomal particle; sequence SEDEEGDEGE…KLVAANKKRK (80 aa). Composition is skewed to basic residues over residues 470–489 and 497–519; these read KKRP…AHKM and EKRK…KKRK.

Belongs to the protein kinase superfamily. RIO-type Ser/Thr kinase family. It depends on Mg(2+) as a cofactor. Post-translationally, autophosphorylated.

Its subcellular location is the cytoplasm. The catalysed reaction is L-seryl-[protein] + ATP = O-phospho-L-seryl-[protein] + ADP + H(+). It catalyses the reaction L-threonyl-[protein] + ATP = O-phospho-L-threonyl-[protein] + ADP + H(+). It carries out the reaction ATP + H2O = ADP + phosphate + H(+). Functionally, involved in the final steps of cytoplasmic maturation of the 40S ribosomal subunit. In vitro, has strong ATPase activity and only low protein kinase activity. The polypeptide is Serine/threonine-protein kinase RIO1 (Chaetomium thermophilum (strain DSM 1495 / CBS 144.50 / IMI 039719) (Thermochaetoides thermophila)).